A 94-amino-acid polypeptide reads, in one-letter code: Large ribosomal subunit protein bL25 (94 aa).

The protein belongs to the bacterial ribosomal protein bL25 family. Part of the 50S ribosomal subunit; part of the 5S rRNA/L5/L18/L25 subcomplex. Contacts the 5S rRNA. Binds to the 5S rRNA independently of L5 and L18.

This is one of the proteins that binds to the 5S RNA in the ribosome where it forms part of the central protuberance. This is Large ribosomal subunit protein bL25 from Salmonella agona (strain SL483).